We begin with the raw amino-acid sequence, 503 residues long: Probable cytosol aminopeptidase (503 aa).

Mn(2+) is bound by residues lysine 274 and aspartate 279. Lysine 286 is an active-site residue. Positions 297, 356, and 358 each coordinate Mn(2+). Arginine 360 is a catalytic residue.

It belongs to the peptidase M17 family. Requires Mn(2+) as cofactor.

The protein localises to the cytoplasm. The catalysed reaction is Release of an N-terminal amino acid, Xaa-|-Yaa-, in which Xaa is preferably Leu, but may be other amino acids including Pro although not Arg or Lys, and Yaa may be Pro. Amino acid amides and methyl esters are also readily hydrolyzed, but rates on arylamides are exceedingly low.. The enzyme catalyses Release of an N-terminal amino acid, preferentially leucine, but not glutamic or aspartic acids.. In terms of biological role, presumably involved in the processing and regular turnover of intracellular proteins. Catalyzes the removal of unsubstituted N-terminal amino acids from various peptides. This is Probable cytosol aminopeptidase from Burkholderia multivorans (strain ATCC 17616 / 249).